The primary structure comprises 713 residues: Cyclomaltodextrin glucanotransferase (713 aa).

A signal peptide spans 1–27; the sequence is MKKFLKSTAALALGLSLTFGLFSPAQA. Positions 28-165 are A1; that stretch reads APDTSVSNKQ…NIKVIIDFAP (138 aa). Residues D54, N56, N59, and N60 each coordinate Ca(2+). C70 and C77 are disulfide-bonded. Positions 78 and 80 each coordinate Ca(2+). 127 to 128 contributes to the substrate binding site; the sequence is YW. N166 contacts Ca(2+). The segment at 166–229 is b; that stretch reads NHTSPASSDQ…NLYDLADLNH (64 aa). Substrate contacts are provided by residues H167 and 172-174; that span reads SSD. I217 contacts Ca(2+). Substrate is bound at residue 220–223; sequence NLYD. Residue D226 participates in Ca(2+) binding. The tract at residues 230 to 433 is A2; that stretch reads NNSTVDVYLK…LRKCNPAIAY (204 aa). R254 is a binding site for substrate. Residue D256 is the Nucleophile of the active site. Substrate is bound at residue 259–260; that stretch reads KH. H260 serves as a coordination point for Ca(2+). Residue E284 is the Proton donor of the active site. A342 contributes to the Ca(2+) binding site. The substrate site is built by H354, D398, and R402. Residues 434-522 are c; sequence GSTQERWINN…GTAVWQYTAA (89 aa). A d region spans residues 523–609; sequence TATPTIGHVG…SNVYDNFEVL (87 aa). Residues 526-607 form the IPT/TIG domain; it reads PTIGHVGPMM…TASNVYDNFE (82 aa). D604 lines the Ca(2+) pocket. The 106-residue stretch at 608-713 folds into the CBM20 domain; the sequence is VLSGDQVSVR…TATINVNWQP (106 aa). Positions 610–713 are e; sequence SGDQVSVRFV…TATINVNWQP (104 aa).

The protein belongs to the glycosyl hydrolase 13 family. Monomer. Requires Ca(2+) as cofactor.

Its subcellular location is the secreted. It carries out the reaction Cyclizes part of a (1-&gt;4)-alpha-D-glucan chain by formation of a (1-&gt;4)-alpha-D-glucosidic bond.. The sequence is that of Cyclomaltodextrin glucanotransferase (cgt) from Niallia circulans (Bacillus circulans).